The following is a 147-amino-acid chain: Deoxyuridine 5'-triphosphate nucleotidohydrolase (147 aa).

Arg24 contributes to the Mg(2+) binding site. DUTP-binding positions include 68-70 (PRS), 82-85 (GVID), Tyr88, Gly93, Ile95, and Arg111.

This sequence belongs to the dUTPase family. Mg(2+) is required as a cofactor.

It carries out the reaction dUTP + H2O = dUMP + diphosphate + H(+). Its function is as follows. This enzyme is involved in nucleotide metabolism: it produces dUMP, the immediate precursor of thymidine nucleotides and it decreases the intracellular concentration of dUTP so that uracil cannot be incorporated into DNA. The protein is Deoxyuridine 5'-triphosphate nucleotidohydrolase (OPG046) of Oryctolagus cuniculus (Rabbit).